The following is a 789-amino-acid chain: MGSSIFCLHLILSSFFLFTFLLAAVNGSKKCYIVYMGAHSHGPSPTSADLELATDSHYDLLGSIFGSREKAKEAIIYSYNRHINGFAALLEEEEAADIAKNPNVVSVFLSKEHKLHTTRSWEFLGLHRRGQNSAWQKGRFGENTIIGNIDTGVWPESQSFSDKGYGTVPSKWRGGLCQINKLPGSMKNTCNRKLIGARYYNKAFEAHNGQLDPLLHTARDFVGHGTHTLSTAGGNFVPGARVFAVGNGTAKGGSPRARVAAYKVCWSLTDPASCYGADVLAAIDQAIDDGVDVINVSFGVSYVVTAEGIFTDEISIGAFHAISKNILLVASAGNDGPTPGTVANVAPWVFTIAASTLDRDFSSNLTINNQLIEGASLFVNLPPNQAFSLILSTDAKLANATFRDAQLCRRGTLDRTKVNGKIVLCTREGKIKSVAEGLEALTAGARGMILNNQMQNGKTLSAEPHVFSTVNTPPRRAKSRPHGVKTTAIGDEDDPLKTGDTIKMSRARTLFGRKPAPVMASFSSRGPNKIQPSILKPDVTAPGVNILAAYSEFASASSLLVDNRRGFKFNVLQGTSMSCPHASGIAGLLKTRHPSWSPAAIKSAIMTTATTLDNTNRPIQDAFDKTLADAFAYGSGHVRPDLAIEPGLVYDLSLTDYLNFLCASGYDQQLISALNFNRTFICSGSHSVNDLNYPSITLPNLRLKPVTIARTVTNVGPPSTYTVSTRSPNGYSIAVVPPSLTFTKIGERKTFKVIVQASSAATRRKYEFGDLRWTDGKHIVRSPITVKRR.

Positions 1 to 27 (MGSSIFCLHLILSSFFLFTFLLAAVNG) are cleaved as a signal peptide. An Inhibitor I9 domain is found at 32 to 116 (YIVYMGAHSH…VFLSKEHKLH (85 aa)). Residues 120–644 (SWEFLGLHRR…SGHVRPDLAI (525 aa)) form the Peptidase S8 domain. Active-site charge relay system residues include Asp150 and His224. Residues 401-489 (TFRDAQLCRR…RPHGVKTTAI (89 aa)) enclose the PA domain. A disordered region spans residues 468–499 (STVNTPPRRAKSRPHGVKTTAIGDEDDPLKTG). Catalysis depends on Ser576, which acts as the Charge relay system.

The protein belongs to the peptidase S8 family. As to expression, expressed in roots, stems, flowers and young leaves. Barely detectable in matures leaves.

The protein resides in the secreted. Its function is as follows. Produces a rapid alkalinization of the cellular media and the induction of defense-related genes, including chitinase 1b, chalcone synthase and CYP93A1. The receptor for GmSubPep is probably different from the receptor(s) for GmPep890 and GmPep914. The sequence is that of Subtilisin-like protease Glyma18g48580 from Glycine max (Soybean).